An 88-amino-acid chain; its full sequence is Small ribosomal subunit protein bS20 (88 aa).

The disordered stretch occupies residues lysine 69–glycine 88. Basic residues predominate over residues threonine 71 to glycine 88.

This sequence belongs to the bacterial ribosomal protein bS20 family.

Its function is as follows. Binds directly to 16S ribosomal RNA. This Pelotomaculum thermopropionicum (strain DSM 13744 / JCM 10971 / SI) protein is Small ribosomal subunit protein bS20.